The chain runs to 206 residues: Recombination protein RecR (206 aa).

The C4-type zinc-finger motif lies at 60–75; that stretch reads CAMCNTFCEGGLCDIC. Positions 83-178 constitute a Toprim domain; it reads RRLMVVHMPA…KVSRLSQGIP (96 aa).

Belongs to the RecR family.

May play a role in DNA repair. It seems to be involved in an RecBC-independent recombinational process of DNA repair. It may act with RecF and RecO. This Neisseria meningitidis serogroup B (strain ATCC BAA-335 / MC58) protein is Recombination protein RecR.